Reading from the N-terminus, the 56-residue chain is Large ribosomal subunit protein bL32 (56 aa).

Basic residues predominate over residues Met1–Arg16. Residues Met1 to Leu22 are disordered.

The protein belongs to the bacterial ribosomal protein bL32 family.

This chain is Large ribosomal subunit protein bL32, found in Aliivibrio salmonicida (strain LFI1238) (Vibrio salmonicida (strain LFI1238)).